The sequence spans 357 residues: Thymidine kinase (357 aa).

17-24 provides a ligand contact to ATP; that stretch reads GAHGLGKT. Glutamate 45 functions as the Proton acceptor in the catalytic mechanism. Arginine 186 contacts ATP. Arginine 192 contributes to the substrate binding site.

Belongs to the herpesviridae thymidine kinase family. In terms of assembly, homodimer.

The catalysed reaction is thymidine + ATP = dTMP + ADP + H(+). In terms of biological role, catalyzes the transfer of the gamma-phospho group of ATP to thymidine to generate dTMP in the salvage pathway of pyrimidine synthesis. The dTMP serves as a substrate for DNA polymerase during viral DNA replication. Allows the virus to be reactivated and to grow in non-proliferative cells lacking a high concentration of phosphorylated nucleic acid precursors. In Bovine herpesvirus 1 (strain 6660) (BoHV-1), this protein is Thymidine kinase.